Consider the following 380-residue polypeptide: MVVFLLLKSQFLYGEDFKLRKGTLIIEEGIIKGFTDEHNEREVIEFKGLVIPSLINAHTHIADNSIKDIGINKTLDELVKPPNGLKHRYLTECSDDLLAEGMKLGLGDMREHGIKYFCDFRENGVRGISLLNKALKCYDYPKAIILGRPIKVDKDEIEEVLKVSNGLGLSGANEFKDDELKLIFKIFKKFKEKDDKKLFAIHAAEHRGAVEYSLNKYGMTEVERLIDLKIKPDFIVHGTHLTDNDLELLKENNIPVVACVRANLSFNVGMPKLNELNDNLLVGIGTDNFMANSPSIFKEMDFIYKLYHIEPKDILRMATINNAKILKLENVGLVDEGFKAVFTFIKPTNAILFSKNIIASVVTRCEKGDVVDFSLMENEE.

Belongs to the metallo-dependent hydrolases superfamily.

This is an uncharacterized protein from Methanocaldococcus jannaschii (strain ATCC 43067 / DSM 2661 / JAL-1 / JCM 10045 / NBRC 100440) (Methanococcus jannaschii).